We begin with the raw amino-acid sequence, 278 residues long: 4-deoxy-L-threo-5-hexosulose-uronate ketol-isomerase (278 aa).

4 residues coordinate Zn(2+): H196, H198, E203, and H245.

This sequence belongs to the KduI family. It depends on Zn(2+) as a cofactor.

It carries out the reaction 5-dehydro-4-deoxy-D-glucuronate = 3-deoxy-D-glycero-2,5-hexodiulosonate. It functions in the pathway glycan metabolism; pectin degradation; 2-dehydro-3-deoxy-D-gluconate from pectin: step 4/5. In terms of biological role, catalyzes the isomerization of 5-dehydro-4-deoxy-D-glucuronate to 3-deoxy-D-glycero-2,5-hexodiulosonate. The chain is 4-deoxy-L-threo-5-hexosulose-uronate ketol-isomerase from Yersinia enterocolitica serotype O:8 / biotype 1B (strain NCTC 13174 / 8081).